The following is a 293-amino-acid chain: 4-hydroxy-tetrahydrodipicolinate synthase (293 aa).

Residue Thr45 coordinates pyruvate. Catalysis depends on Tyr133, which acts as the Proton donor/acceptor. Lys162 (schiff-base intermediate with substrate) is an active-site residue. A pyruvate-binding site is contributed by Ile204.

Belongs to the DapA family. As to quaternary structure, homotetramer; dimer of dimers.

It localises to the cytoplasm. It carries out the reaction L-aspartate 4-semialdehyde + pyruvate = (2S,4S)-4-hydroxy-2,3,4,5-tetrahydrodipicolinate + H2O + H(+). Its pathway is amino-acid biosynthesis; L-lysine biosynthesis via DAP pathway; (S)-tetrahydrodipicolinate from L-aspartate: step 3/4. In terms of biological role, catalyzes the condensation of (S)-aspartate-beta-semialdehyde [(S)-ASA] and pyruvate to 4-hydroxy-tetrahydrodipicolinate (HTPA). The sequence is that of 4-hydroxy-tetrahydrodipicolinate synthase from Mesorhizobium japonicum (strain LMG 29417 / CECT 9101 / MAFF 303099) (Mesorhizobium loti (strain MAFF 303099)).